Reading from the N-terminus, the 527-residue chain is Protein IQ-DOMAIN 4 (527 aa).

Residues 13–90 form a disordered region; sequence CLSPGKDKKN…PPSPPPPPPA (78 aa). Positions 17-26 are enriched in basic and acidic residues; that stretch reads GKDKKNQKPE. Over residues 63 to 90 the composition is skewed to pro residues; it reads PYPPPPPLPDFAPQPLLPPPSPPPPPPA. The IQ domain occupies 147–175; that stretch reads EETAAIKIQNAYRCYTARRTLRALRGMAR. The interval 256–273 is calmodulin-binding; the sequence is RSVNRKEASVRRERALAY. Positions 323-527 are disordered; the sequence is VSVKSSLKRE…EKKRRNGGSS (205 aa). The segment covering 335 to 360 has biased composition (polar residues); the sequence is IKSSPARSKTQKSASQSSIQWPVNND. The segment covering 361 to 370 has biased composition (basic and acidic residues); it reads TKSRKIEVTN. 2 stretches are compositionally biased toward polar residues: residues 399-422 and 437-455; these read LDNTQTVKSKVSVETTSNVSNAQT and NTKTLKSKSSVGTTGNLAN. Residues 471–481 are compositionally biased toward basic and acidic residues; it reads PKKEVVADKKK. The Nuclear localization signal signature appears at 478–485; it reads DKKKPPQM.

It belongs to the IQD family. In terms of assembly, binds to multiple calmodulin (CaM) in the presence of Ca(2+) and CaM-like proteins.

Its subcellular location is the nucleus. The protein resides in the nucleolus. In terms of biological role, may be involved in cooperative interactions with calmodulins or calmodulin-like proteins. Recruits calmodulin proteins to microtubules, thus being a potential scaffold in cellular signaling and trafficking. May associate with nucleic acids and regulate gene expression at the transcriptional or post-transcriptional level. This Arabidopsis thaliana (Mouse-ear cress) protein is Protein IQ-DOMAIN 4.